The following is a 528-amino-acid chain: Autophagy-related protein 22 (528 aa).

Residues 1 to 98 are Cytoplasmic-facing; that stretch reads MSYGTINDMN…IFVDTSSFAL (98 aa). A helical transmembrane segment spans residues 99 to 119; the sequence is YVFSLSVLFQTIIVISVSGIV. Topologically, residues 120-130 are vacuolar; that stretch reads DLWGSVKFKGR. The helical transmembrane segment at 131–151 threads the bilayer; the sequence is ILVWFGIVGALSTVAISKLND. The Cytoplasmic portion of the chain corresponds to 152–153; that stretch reads TQ. A helical membrane pass occupies residues 154-174; the sequence is IYSLAGLYIVANGCFGVINVV. Topologically, residues 175–210 are vacuolar; it reads GNSLLPIFVKDSLKCQSQGAYEPDKVDSLTTVISGR. Residues 211-231 form a helical membrane-spanning segment; that stretch reads GASLGYSSALIVQIVSMFLVA. Over 232-241 the chain is Cytoplasmic; that stretch reads SKKGSKQDVQ. Residues 242 to 262 form a helical membrane-spanning segment; it reads VAVLFVGIWWFVWQLPMIWLI. Residues 263 to 318 lie on the Vacuolar side of the membrane; that stretch reads DDVTIPIRVDDSTLASARSPYPGEQDALGQLNWKNYLSYGWVSLFESFKHARLLKD. At serine 278 the chain carries Phosphoserine. Residues 319–339 traverse the membrane as a helical segment; it reads VMIFLIAWFIISDSITTINST. Over 340-352 the chain is Cytoplasmic; it reads AVLFSKAELHMST. The helical transmembrane segment at 353–373 threads the bilayer; that stretch reads LNLIMISVLTVVNAMLGAFMI. The Vacuolar portion of the chain corresponds to 374–388; the sequence is PQFLATKFRWTSSQT. A helical transmembrane segment spans residues 389–409; that stretch reads LMYIIIWASFIPFYGILGFFF. Residues 410–417 lie on the Cytoplasmic side of the membrane; sequence NAFGLKHK. A helical transmembrane segment spans residues 418-438; the sequence is FEMFLLAIWYGLSLGGLSAVS. Residues 439–485 are Vacuolar-facing; the sequence is RSVFSLIVPPGKESTFFSMFSITDKGSSILGPFLVGLLTDKTHNIRY. The chain crosses the membrane as a helical span at residues 486–506; that stretch reads SFYFFFLLLMLSLPVLNCLDV. Over 507-528 the chain is Cytoplasmic; it reads KRGRREAEELSQVLPESERRLD.

This sequence belongs to the ATG22 family.

It localises to the vacuole membrane. In terms of biological role, vacuolar effluxer which mediate the efflux of leucine and other amino acids resulting from autophagic degradation. The release of autophagic amino acids allows the maintenance of protein synthesis and viability during nitrogen starvation. The chain is Autophagy-related protein 22 (ATG22) from Saccharomyces cerevisiae (strain ATCC 204508 / S288c) (Baker's yeast).